Here is a 21-residue protein sequence, read N- to C-terminus: Magainin-B1 (21 aa).

In terms of tissue distribution, expressed by the skin glands.

Its subcellular location is the secreted. Its function is as follows. Has no antimicrobial activity against tested bacteria. The polypeptide is Magainin-B1 (Xenopus borealis (Kenyan clawed frog)).